Consider the following 166-residue polypeptide: Small ribosomal subunit protein uS5 (166 aa).

The S5 DRBM domain maps to 11–74; the sequence is LQEKLIAVNR…EKARRNMKTV (64 aa).

The protein belongs to the universal ribosomal protein uS5 family. In terms of assembly, part of the 30S ribosomal subunit. Contacts proteins S4 and S8.

In terms of biological role, with S4 and S12 plays an important role in translational accuracy. Functionally, located at the back of the 30S subunit body where it stabilizes the conformation of the head with respect to the body. In Photorhabdus laumondii subsp. laumondii (strain DSM 15139 / CIP 105565 / TT01) (Photorhabdus luminescens subsp. laumondii), this protein is Small ribosomal subunit protein uS5.